The sequence spans 123 residues: Small ribosomal subunit protein uS13c (123 aa).

The disordered stretch occupies residues 90–123 (GKRHRNSLPVRGQRTRTNARSRRGAKKTVTGKKK). The span at 102–123 (QRTRTNARSRRGAKKTVTGKKK) shows a compositional bias: basic residues.

Belongs to the universal ribosomal protein uS13 family. In terms of assembly, part of the 30S ribosomal subunit.

It is found in the plastid. It localises to the chloroplast. Located at the top of the head of the 30S subunit, it contacts several helices of the 16S rRNA. This chain is Small ribosomal subunit protein uS13c, found in Thalassiosira pseudonana (Marine diatom).